The chain runs to 87 residues: Small ribosomal subunit protein bS20 (87 aa).

It belongs to the bacterial ribosomal protein bS20 family.

Its function is as follows. Binds directly to 16S ribosomal RNA. This chain is Small ribosomal subunit protein bS20, found in Clostridium beijerinckii (strain ATCC 51743 / NCIMB 8052) (Clostridium acetobutylicum).